A 61-amino-acid chain; its full sequence is Prophage outer membrane lipoprotein RzoR (61 aa).

The first 19 residues, 1-19 (MRKLKMMLCVMMLPLVVVG), serve as a signal peptide directing secretion. Cys20 is lipidated: N-palmitoyl cysteine. Residue Cys20 is the site of S-diacylglycerol cysteine attachment.

It belongs to the lambdalikevirus o-spanin family. In terms of assembly, homodimer; disulfide-linked. Interacts (via C-terminus) with RZ (via C-terminus). Part of the spanin complex which spans the entire periplasmic space. The spanin complex is composed of spanin, inner membrane subunit and spanin, outer membrane subunit.

The protein localises to the cell outer membrane. Component of the spanin complex that disrupts the outer membrane and causes cell lysis during virus exit. The spanin complex conducts the final step in cell lysis by disrupting the outer membrane after holin and endolysin action have permeabilized the inner membrane and degraded the host peptidoglycans. The chain is Prophage outer membrane lipoprotein RzoR (rzoR) from Escherichia coli (strain K12).